The sequence spans 109 residues: MINYFWFVLAAFCEIAGCYAFYLWLRLGKSALWVLPGLLSLTLFALLLTRVEASYAGRAYAAYGGIYVAASLFWLAFVERSRPLWSDWLGVALCVVGASVVLFGPRLSQ.

4 consecutive transmembrane segments (helical) span residues 5-25, 27-47, 59-79, and 84-104; these read FWFV…YLWL, LGKS…FALL, AYAA…AFVE, and LWSD…VLFG.

Belongs to the UPF0060 family.

It localises to the cell inner membrane. This chain is UPF0060 membrane protein PA3275, found in Pseudomonas aeruginosa (strain ATCC 15692 / DSM 22644 / CIP 104116 / JCM 14847 / LMG 12228 / 1C / PRS 101 / PAO1).